A 397-amino-acid polypeptide reads, in one-letter code: Golgi-associated RAB2 interactor protein 2 (397 aa).

2 disordered regions span residues 1 to 24 (MKKSNRKSPTRIDEKDDICVPDSK) and 342 to 397 (QTTL…KLLN). Basic and acidic residues-rich tracts occupy residues 10-24 (TRIDEKDDICVPDSK), 353-369 (EKSKEMSDRPREIRTMD), and 376-397 (KAEEPRSRRTDSDTSDKCKLLN).

It belongs to the GARIN family. Interacts with CALM1.

Its subcellular location is the cell projection. The protein localises to the cilium. The protein resides in the flagellum. Its function is as follows. Seems to play a role in sperm motility. This is Golgi-associated RAB2 interactor protein 2 (GARIN2) from Bos taurus (Bovine).